Reading from the N-terminus, the 180-residue chain is Cytokinin-beta-glucosidase 2 (180 aa).

Its function is as follows. Hydrolyzes cytokinin glucosides thus liberating free cytokinins. This chain is Cytokinin-beta-glucosidase 2 (ROLC2), found in Linaria vulgaris (Toadflax).